The sequence spans 401 residues: Probable tRNA sulfurtransferase (401 aa).

Positions 60 to 165 (EALFPHLKQV…EEATFLTIRD (106 aa)) constitute a THUMP domain. ATP-binding positions include 183-184 (ML), 208-209 (HF), arginine 265, glycine 287, and glutamine 296.

Belongs to the ThiI family.

It localises to the cytoplasm. The enzyme catalyses [ThiI sulfur-carrier protein]-S-sulfanyl-L-cysteine + a uridine in tRNA + 2 reduced [2Fe-2S]-[ferredoxin] + ATP + H(+) = [ThiI sulfur-carrier protein]-L-cysteine + a 4-thiouridine in tRNA + 2 oxidized [2Fe-2S]-[ferredoxin] + AMP + diphosphate. The catalysed reaction is [ThiS sulfur-carrier protein]-C-terminal Gly-Gly-AMP + S-sulfanyl-L-cysteinyl-[cysteine desulfurase] + AH2 = [ThiS sulfur-carrier protein]-C-terminal-Gly-aminoethanethioate + L-cysteinyl-[cysteine desulfurase] + A + AMP + 2 H(+). It participates in cofactor biosynthesis; thiamine diphosphate biosynthesis. Catalyzes the ATP-dependent transfer of a sulfur to tRNA to produce 4-thiouridine in position 8 of tRNAs, which functions as a near-UV photosensor. Also catalyzes the transfer of sulfur to the sulfur carrier protein ThiS, forming ThiS-thiocarboxylate. This is a step in the synthesis of thiazole, in the thiamine biosynthesis pathway. The sulfur is donated as persulfide by IscS. This chain is Probable tRNA sulfurtransferase, found in Bacillus subtilis (strain 168).